Consider the following 648-residue polypeptide: ATP-dependent DNA helicase Q1 (648 aa).

The Helicase ATP-binding domain occupies 100–275; it reads INVTMARKDI…QKILCVGKCL (176 aa). An ATP-binding site is contributed by 113–120; that stretch reads MPTGGGKS. Residues 219–222 carry the DEVH box motif; it reads DEVH. A Helicase C-terminal domain is found at 299 to 451; that stretch reads DFTEDIVKLI…EMVSYCQNVS (153 aa). Zn(2+)-binding residues include Cys-453, Cys-471, Cys-475, and Cys-478. N6-acetyllysine is present on residues Lys-514 and Lys-522. Residue Ser-597 is modified to Phosphoserine. The interval 601 to 648 is disordered; sequence ALSEARQVEQVDSKGEEQSSGNSQKSKSRLQPSGSKNAGAKKRKLDDA. The segment covering 606–617 has biased composition (basic and acidic residues); sequence RQVEQVDSKGEE. A compositionally biased stretch (polar residues) spans 618-636; that stretch reads QSSGNSQKSKSRLQPSGSK. Phosphoserine is present on Ser-633. Basic residues predominate over residues 639–648; that stretch reads GAKKRKLDDA.

This sequence belongs to the helicase family. RecQ subfamily. As to quaternary structure, may form homodimers or higher order oligomers. Interacts with EXO1. Interacts with MLH1. Interacts with PARP1. Mg(2+) serves as cofactor. Requires Mn(2+) as cofactor. Zn(2+) is required as a cofactor. As to expression, expressed in all tissues examined. In terms of tissue distribution, only expressed in spermatocytes. Expression increases at pachytene (17 days old) and decreases after completion of meiosis II (7 weeks old).

The protein resides in the nucleus. The catalysed reaction is Couples ATP hydrolysis with the unwinding of duplex DNA by translocating in the 3'-5' direction.. The enzyme catalyses ATP + H2O = ADP + phosphate + H(+). It catalyses the reaction dATP + H2O = dADP + phosphate + H(+). Functionally, DNA helicase that plays a role in DNA damage repair and genome stability. Exhibits a magnesium- and ATP-dependent DNA-helicase activity that unwinds single- and double-stranded DNA in a 3'-5' direction. Plays a role in restoring regressed replication forks. Required to restart stalled replication forks induced by abortive topoisomerase 1 and 2 lesions. May play a role in the repair of DNA that is damaged by ultraviolet light or other mutagens. The protein is ATP-dependent DNA helicase Q1 (Recql) of Mus musculus (Mouse).